A 339-amino-acid polypeptide reads, in one-letter code: Probable cytosolic iron-sulfur protein assembly protein CIAO1 (339 aa).

WD repeat units follow at residues histidine 14–lysine 53, glycine 59–valine 98, glycine 103–cysteine 142, serine 148–cysteine 187, glycine 192–glycine 231, phenylalanine 250–glutamine 289, and alanine 301–isoleucine 339. An LYR motif; required for interaction with HSC20 motif is present at residues leucine 176–arginine 178.

Belongs to the WD repeat CIA1 family. In terms of assembly, component of the CIA complex. Interacts with CIAO2A and forms a complex with CIAO2B and MMS19; the interactions with CIAO2A and CIAO2B are mutually exclusive. Interacts with CHD1L, ERCC2, IREB2 and POLD1. Component of the MMXD complex, which includes CIAO1, ERCC2, CIAO2B, MMS19 and SLC25A5. Interacts with WT1. Interacts with CIAO3. Interacts (via LYR motif) with HSC20.

It localises to the cytoplasm. Its function is as follows. Key component of the cytosolic iron-sulfur protein assembly (CIA) complex, a multiprotein complex that mediates the incorporation of iron-sulfur cluster into extramitochondrial Fe/S proteins. As a CIA complex component, interacts specifically with CIAO2A or CIAO2B and MMS19 to assist different branches of iron-sulfur protein assembly, depending of its interactors. The complex CIAO1:CIAO2B:MMS19 binds to and facilitates the assembly of most cytosolic-nuclear Fe/S proteins. CIAO1:CIAO2A specifically matures ACO1 and stabilizes IREB2. Seems to specifically modulate the transactivation activity of WT1. As part of the mitotic spindle-associated MMXD complex it may play a role in chromosome segregation. The polypeptide is Probable cytosolic iron-sulfur protein assembly protein CIAO1 (Bos taurus (Bovine)).